The primary structure comprises 160 residues: Aspartate 1-decarboxylase 2 (160 aa).

The active-site Schiff-base intermediate with substrate; via pyruvic acid is the serine 25. Serine 25 bears the Pyruvic acid (Ser) mark. Threonine 57 contributes to the substrate binding site. Catalysis depends on tyrosine 58, which acts as the Proton donor. 73 to 75 (GAA) is a binding site for substrate.

It belongs to the PanD family. As to quaternary structure, heterooctamer of four alpha and four beta subunits. Requires pyruvate as cofactor. Post-translationally, is synthesized initially as an inactive proenzyme, which is activated by self-cleavage at a specific serine bond to produce a beta-subunit with a hydroxyl group at its C-terminus and an alpha-subunit with a pyruvoyl group at its N-terminus.

The protein localises to the cytoplasm. It catalyses the reaction L-aspartate + H(+) = beta-alanine + CO2. It participates in cofactor biosynthesis; (R)-pantothenate biosynthesis; beta-alanine from L-aspartate: step 1/1. In terms of biological role, catalyzes the pyruvoyl-dependent decarboxylation of aspartate to produce beta-alanine. The sequence is that of Aspartate 1-decarboxylase 2 from Frankia casuarinae (strain DSM 45818 / CECT 9043 / HFP020203 / CcI3).